A 381-amino-acid polypeptide reads, in one-letter code: Pentatricopeptide repeat-containing protein 2, mitochondrial (381 aa).

The stretch at 159-193 (TSFNILMDMLFTKGKYERALQVLIEMKNQDVRFSK) is one PPR repeat. Residue serine 375 is modified to Phosphoserine.

Belongs to the PTCD2 family. High expression in heart and liver and low expression in kidney, brain and testis.

The protein localises to the mitochondrion. Functionally, involved in mitochondrial RNA maturation and mitochondrial respiratory chain function. The chain is Pentatricopeptide repeat-containing protein 2, mitochondrial (Ptcd2) from Mus musculus (Mouse).